A 248-amino-acid chain; its full sequence is 2,3-bisphosphoglycerate-dependent phosphoglycerate mutase (248 aa).

Substrate contacts are provided by residues arginine 10–asparagine 17, threonine 23–glycine 24, arginine 62, glutamate 89–tyrosine 92, lysine 100, arginine 116–arginine 117, and glycine 183–asparagine 184. Catalysis depends on histidine 11, which acts as the Tele-phosphohistidine intermediate. Glutamate 89 acts as the Proton donor/acceptor in catalysis.

This sequence belongs to the phosphoglycerate mutase family. BPG-dependent PGAM subfamily.

The enzyme catalyses (2R)-2-phosphoglycerate = (2R)-3-phosphoglycerate. It participates in carbohydrate degradation; glycolysis; pyruvate from D-glyceraldehyde 3-phosphate: step 3/5. Catalyzes the interconversion of 2-phosphoglycerate and 3-phosphoglycerate. This is 2,3-bisphosphoglycerate-dependent phosphoglycerate mutase from Corynebacterium kroppenstedtii (strain DSM 44385 / JCM 11950 / CIP 105744 / CCUG 35717).